Reading from the N-terminus, the 264-residue chain is Acyl-[acyl-carrier-protein]--UDP-N-acetylglucosamine O-acyltransferase (264 aa).

The protein belongs to the transferase hexapeptide repeat family. LpxA subfamily. Homotrimer.

It is found in the cytoplasm. It carries out the reaction a (3R)-hydroxyacyl-[ACP] + UDP-N-acetyl-alpha-D-glucosamine = a UDP-3-O-[(3R)-3-hydroxyacyl]-N-acetyl-alpha-D-glucosamine + holo-[ACP]. It functions in the pathway glycolipid biosynthesis; lipid IV(A) biosynthesis; lipid IV(A) from (3R)-3-hydroxytetradecanoyl-[acyl-carrier-protein] and UDP-N-acetyl-alpha-D-glucosamine: step 1/6. Involved in the biosynthesis of lipid A, a phosphorylated glycolipid that anchors the lipopolysaccharide to the outer membrane of the cell. This chain is Acyl-[acyl-carrier-protein]--UDP-N-acetylglucosamine O-acyltransferase, found in Leptothrix cholodnii (strain ATCC 51168 / LMG 8142 / SP-6) (Leptothrix discophora (strain SP-6)).